The primary structure comprises 250 residues: tRNA pseudouridine synthase A (250 aa).

Aspartate 52 serves as the catalytic Nucleophile. Tyrosine 111 provides a ligand contact to substrate.

Belongs to the tRNA pseudouridine synthase TruA family. Homodimer.

It catalyses the reaction uridine(38/39/40) in tRNA = pseudouridine(38/39/40) in tRNA. In terms of biological role, formation of pseudouridine at positions 38, 39 and 40 in the anticodon stem and loop of transfer RNAs. In Methylorubrum extorquens (strain PA1) (Methylobacterium extorquens), this protein is tRNA pseudouridine synthase A.